The primary structure comprises 382 residues: Calcium/calmodulin-dependent protein kinase (382 aa).

Residues 23–278 (YKFGRTLGAG…SKEALGHIWL (256 aa)) form the Protein kinase domain. Residues 29–37 (LGAGTYGVV) and Lys50 contribute to the ATP site. Catalysis depends on Asp142, which acts as the Proton acceptor. Residues 291–301 (ELEAYRRRARL) form a calmodulin-binding region. 2 disordered regions span residues 318-344 (KEHE…GDGS) and 359-382 (QKQE…FSNA).

It belongs to the protein kinase superfamily. CAMK Ser/Thr protein kinase family. CaMK subfamily.

The catalysed reaction is L-seryl-[protein] + ATP = O-phospho-L-seryl-[protein] + ADP + H(+). It catalyses the reaction L-threonyl-[protein] + ATP = O-phospho-L-threonyl-[protein] + ADP + H(+). The polypeptide is Calcium/calmodulin-dependent protein kinase (Metarhizium anisopliae (Entomophthora anisopliae)).